Consider the following 233-residue polypeptide: MKTECRELFAMTVILDIEGTVCPITFVKDTLFPYFLEQLHPILSSLQFPLDKADPVANICSQFPSHVQQDETSLITYIRQLVASDTKDPVLKSLQGLVWKKGYDNGDLVAPIYDDAIALITTSSEPIYIYSSGSVAAQKLLFSHVKGNLDLTPHLAGYFDITTSGHKQDSTSYKSILHAIGNPEPATVTFYSDSPAEVRAAIEAGMKATIVVRPGNGPLTDQDRQLGTITSFP.

The Mg(2+) site is built by Asp16 and Glu18. Residues 131 to 132 (SS) and Lys167 contribute to the substrate site. Asp193 contributes to the Mg(2+) binding site.

Belongs to the HAD-like hydrolase superfamily. MasA/MtnC family. Monomer. It depends on Mg(2+) as a cofactor.

It is found in the cytoplasm. Its subcellular location is the nucleus. It carries out the reaction 5-methylsulfanyl-2,3-dioxopentyl phosphate + H2O = 1,2-dihydroxy-5-(methylsulfanyl)pent-1-en-3-one + phosphate. Its pathway is amino-acid biosynthesis; L-methionine biosynthesis via salvage pathway; L-methionine from S-methyl-5-thio-alpha-D-ribose 1-phosphate: step 3/6. It functions in the pathway amino-acid biosynthesis; L-methionine biosynthesis via salvage pathway; L-methionine from S-methyl-5-thio-alpha-D-ribose 1-phosphate: step 4/6. Functionally, bifunctional enzyme that catalyzes the enolization of 2,3-diketo-5-methylthiopentyl-1-phosphate (DK-MTP-1-P) into the intermediate 2-hydroxy-3-keto-5-methylthiopentenyl-1-phosphate (HK-MTPenyl-1-P), which is then dephosphorylated to form the acireductone 1,2-dihydroxy-3-keto-5-methylthiopentene (DHK-MTPene). In Meyerozyma guilliermondii (strain ATCC 6260 / CBS 566 / DSM 6381 / JCM 1539 / NBRC 10279 / NRRL Y-324) (Yeast), this protein is Enolase-phosphatase E1.